The chain runs to 943 residues: Protein translocase subunit SecA (943 aa).

ATP contacts are provided by residues Gln77, 95 to 99 (GEGKT), and Asp484.

Belongs to the SecA family. Monomer and homodimer. Part of the essential Sec protein translocation apparatus which comprises SecA, SecYEG and auxiliary proteins SecDF. Other proteins may also be involved.

The protein localises to the cell membrane. It localises to the cytoplasm. The catalysed reaction is ATP + H2O + cellular proteinSide 1 = ADP + phosphate + cellular proteinSide 2.. Functionally, part of the Sec protein translocase complex. Interacts with the SecYEG preprotein conducting channel. Has a central role in coupling the hydrolysis of ATP to the transfer of proteins into and across the cell membrane, serving as an ATP-driven molecular motor driving the stepwise translocation of polypeptide chains across the membrane. The sequence is that of Protein translocase subunit SecA from Mesoplasma florum (strain ATCC 33453 / NBRC 100688 / NCTC 11704 / L1) (Acholeplasma florum).